Consider the following 72-residue polypeptide: Translational regulator CsrA (72 aa).

Belongs to the CsrA/RsmA family. As to quaternary structure, homodimer; the beta-strands of each monomer intercalate to form a hydrophobic core, while the alpha-helices form wings that extend away from the core.

The protein localises to the cytoplasm. Its function is as follows. A translational regulator that binds mRNA to regulate translation initiation and/or mRNA stability. Usually binds in the 5'-UTR at or near the Shine-Dalgarno sequence preventing ribosome-binding, thus repressing translation. Its main target seems to be the major flagellin gene, while its function is anatagonized by FliW. This is Translational regulator CsrA from Clostridium botulinum (strain ATCC 19397 / Type A).